The primary structure comprises 415 residues: Interleukin-5 receptor subunit alpha (415 aa).

A signal peptide spans 1–17; sequence MVPVLLILVGALATLQA. The Extracellular portion of the chain corresponds to 18-339; the sequence is DLLNHKKFLL…KERKSLVEWH (322 aa). The Fibronectin type-III 1 domain occupies 29-120; sequence PPVNFTIKAT…VSAELKAPPG (92 aa). Residues asparagine 32 and asparagine 128 are each glycosylated (N-linked (GlcNAc...) asparagine). 2 disulfide bridges follow: cysteine 131–cysteine 152 and cysteine 179–cysteine 193. Residues asparagine 213 and asparagine 241 are each glycosylated (N-linked (GlcNAc...) asparagine). The 94-residue stretch at 238 to 331 folds into the Fibronectin type-III 2 domain; it reads PPRNVTVEIE…WSQPIYVGKE (94 aa). A disulfide bridge connects residues cysteine 266 and cysteine 313. Residues 319–323 carry the WSXWS motif motif; that stretch reads WGEWS. A helical transmembrane segment spans residues 340 to 361; sequence LIVLPTAACFVLLIFSLICRVC. The Cytoplasmic portion of the chain corresponds to 362 to 415; it reads HLWTRLFPPVPAPKSNIKDLPVVTEYEKPSNETKIEVVHCVEEVGFEVMGNSTF. The Box 1 motif motif lies at 367-375; the sequence is LFPPVPAPK.

As to quaternary structure, interacts with IL5. Interacts with CSF2RB. Interacts with JAK2. Interacts with SDCBP. As to expression, expressed on eosinophils and basophils. Also on B-cells.

The protein resides in the membrane. Its function is as follows. Cell surface receptor that plays an important role in the survival, differentiation, and chemotaxis of eosinophils. Acts by forming a heterodimeric receptor with CSF2RB subunit and subsequently binding to interleukin-5. In unstimulated conditions, interacts constitutively with JAK2. Heterodimeric receptor activation leads to JAK2 stimulation and subsequent activation of the JAK-STAT pathway. The sequence is that of Interleukin-5 receptor subunit alpha (Il5ra) from Mus musculus (Mouse).